The primary structure comprises 122 residues: Large ribosomal subunit protein uL14 (122 aa).

This sequence belongs to the universal ribosomal protein uL14 family. Part of the 50S ribosomal subunit. Forms a cluster with proteins L3 and L19. In the 70S ribosome, L14 and L19 interact and together make contacts with the 16S rRNA in bridges B5 and B8.

Its function is as follows. Binds to 23S rRNA. Forms part of two intersubunit bridges in the 70S ribosome. The polypeptide is Large ribosomal subunit protein uL14 (Burkholderia vietnamiensis (strain G4 / LMG 22486) (Burkholderia cepacia (strain R1808))).